The chain runs to 196 residues: ATP-dependent Clp protease proteolytic subunit (196 aa).

Residue serine 96 is the Nucleophile of the active site. Histidine 121 is a catalytic residue.

Belongs to the peptidase S14 family. As to quaternary structure, fourteen ClpP subunits assemble into 2 heptameric rings which stack back to back to give a disk-like structure with a central cavity, resembling the structure of eukaryotic proteasomes.

Its subcellular location is the cytoplasm. The enzyme catalyses Hydrolysis of proteins to small peptides in the presence of ATP and magnesium. alpha-casein is the usual test substrate. In the absence of ATP, only oligopeptides shorter than five residues are hydrolyzed (such as succinyl-Leu-Tyr-|-NHMec, and Leu-Tyr-Leu-|-Tyr-Trp, in which cleavage of the -Tyr-|-Leu- and -Tyr-|-Trp bonds also occurs).. In terms of biological role, cleaves peptides in various proteins in a process that requires ATP hydrolysis. Has a chymotrypsin-like activity. Plays a major role in the degradation of misfolded proteins. The protein is ATP-dependent Clp protease proteolytic subunit of Streptococcus pneumoniae (strain P1031).